Here is a 185-residue protein sequence, read N- to C-terminus: Elongation factor P (185 aa).

This sequence belongs to the elongation factor P family.

The protein localises to the cytoplasm. The protein operates within protein biosynthesis; polypeptide chain elongation. Functionally, involved in peptide bond synthesis. Stimulates efficient translation and peptide-bond synthesis on native or reconstituted 70S ribosomes in vitro. Probably functions indirectly by altering the affinity of the ribosome for aminoacyl-tRNA, thus increasing their reactivity as acceptors for peptidyl transferase. This chain is Elongation factor P, found in Mesomycoplasma hyopneumoniae (strain 7448) (Mycoplasma hyopneumoniae).